A 487-amino-acid polypeptide reads, in one-letter code: Malonate-semialdehyde dehydrogenase 2 (487 aa).

NAD(+)-binding residues include phenylalanine 154, lysine 178, glutamate 181, arginine 182, and serine 231. Catalysis depends on cysteine 286, which acts as the Nucleophile. Residue glutamate 386 participates in NAD(+) binding.

The protein belongs to the aldehyde dehydrogenase family. IolA subfamily. In terms of assembly, homotetramer.

The catalysed reaction is 3-oxopropanoate + NAD(+) + CoA + H2O = hydrogencarbonate + acetyl-CoA + NADH + H(+). It carries out the reaction 2-methyl-3-oxopropanoate + NAD(+) + CoA + H2O = propanoyl-CoA + hydrogencarbonate + NADH + H(+). It functions in the pathway polyol metabolism; myo-inositol degradation into acetyl-CoA; acetyl-CoA from myo-inositol: step 7/7. Its function is as follows. Catalyzes the oxidation of malonate semialdehyde (MSA) and methylmalonate semialdehyde (MMSA) into acetyl-CoA and propanoyl-CoA, respectively. Is involved in a myo-inositol catabolic pathway. Bicarbonate, and not CO2, is the end-product of the enzymatic reaction. The polypeptide is Malonate-semialdehyde dehydrogenase 2 (Bacillus anthracis).